The following is a 162-amino-acid chain: UPF0178 protein Rsph17029_2512 (162 aa).

Belongs to the UPF0178 family.

The polypeptide is UPF0178 protein Rsph17029_2512 (Cereibacter sphaeroides (strain ATCC 17029 / ATH 2.4.9) (Rhodobacter sphaeroides)).